The primary structure comprises 562 residues: Carboxylesterase 1E (562 aa).

A signal peptide spans 1–19; it reads MCLSALILVSLAAFTAGAG. Residue Asn80 is glycosylated (N-linked (GlcNAc...) asparagine). Cys88 and Cys117 are oxidised to a cystine. Ser222 serves as the catalytic Acyl-ester intermediate. Cys274 and Cys285 are oxidised to a cystine. Asn276 carries an N-linked (GlcNAc...) asparagine glycan. Active-site charge relay system residues include Glu354 and His467. An N-linked (GlcNAc...) asparagine glycan is attached at Asn490. Positions 559 to 562 match the Prevents secretion from ER motif; that stretch reads HTEL.

It belongs to the type-B carboxylesterase/lipase family.

The protein resides in the endoplasmic reticulum lumen. It localises to the microsome membrane. It carries out the reaction a carboxylic ester + H2O = an alcohol + a carboxylate + H(+). The catalysed reaction is all-trans-retinyl hexadecanoate + H2O = all-trans-retinol + hexadecanoate + H(+). Its function is as follows. Involved in the detoxification of xenobiotics and in the activation of ester and amide prodrugs. Hydrolyzes retinyl esters. This chain is Carboxylesterase 1E, found in Mus musculus (Mouse).